A 467-amino-acid polypeptide reads, in one-letter code: UDP-glycosyltransferase 90A2 (467 aa).

Residues serine 289, 341 to 343 (VDQ), 358 to 366 (HCGWNSLTE), and 380 to 383 (AAEQ) each bind UDP-alpha-D-glucose.

Belongs to the UDP-glycosyltransferase family.

The polypeptide is UDP-glycosyltransferase 90A2 (UGT90A2) (Arabidopsis thaliana (Mouse-ear cress)).